The primary structure comprises 202 residues: Imidazoleglycerol-phosphate dehydratase (202 aa).

It belongs to the imidazoleglycerol-phosphate dehydratase family. Homotrimer.

The catalysed reaction is D-erythro-1-(imidazol-4-yl)glycerol 3-phosphate = 3-(imidazol-4-yl)-2-oxopropyl phosphate + H2O. The protein operates within amino-acid biosynthesis; L-histidine biosynthesis; L-histidine from 5-phospho-alpha-D-ribose 1-diphosphate: step 6/9. The chain is Imidazoleglycerol-phosphate dehydratase (HIS3) from Cryptococcus neoformans var. neoformans serotype D (strain B-3501A) (Filobasidiella neoformans).